A 329-amino-acid polypeptide reads, in one-letter code: Epoxide hydrolase (329 aa).

One can recognise an AB hydrolase-1 domain in the interval 35 to 308; sequence PAVLFCHGFP…DNVGHWVQHE (274 aa). Asp-111 functions as the Nucleophile in the catalytic mechanism. Tyr-242 serves as the catalytic Proton donor. Residue His-303 is the Proton acceptor of the active site.

It belongs to the AB hydrolase superfamily. Epoxide hydrolase family. Homodimer.

The enzyme catalyses an epoxide + H2O = an ethanediol. The catalysed reaction is (R)-styrene oxide + H2O = (R)-styrene glycol. It carries out the reaction (S)-styrene oxide + H2O = (S)-styrene glycol. It catalyses the reaction 3,4-epoxy-1-cyclohexene + H2O = cyclohex-3-ene-1,2-diol. In terms of biological role, catalyzes the hydrolysis of various epoxides into diols. In vitro, shows the strongest activity toward aromatic and cyclic aliphatic epoxide compounds, since it shows strong activity toward (R)-styrene oxide, (S)-styrene oxide, and 3,4-epoxy-1-cyclohexene, but very weak activity toward (R)-epichlorohydrin, (S)-epichlorohydrin, and 1,2-epoxy-9-decene. The protein is Epoxide hydrolase of Caballeronia sordidicola (Burkholderia sordidicola).